A 371-amino-acid chain; its full sequence is DNA replication and repair protein RecF (371 aa).

30-37 (GANAQGKT) provides a ligand contact to ATP.

It belongs to the RecF family.

It localises to the cytoplasm. In terms of biological role, the RecF protein is involved in DNA metabolism; it is required for DNA replication and normal SOS inducibility. RecF binds preferentially to single-stranded, linear DNA. It also seems to bind ATP. This Lacticaseibacillus paracasei (strain ATCC 334 / BCRC 17002 / CCUG 31169 / CIP 107868 / KCTC 3260 / NRRL B-441) (Lactobacillus paracasei) protein is DNA replication and repair protein RecF.